The sequence spans 429 residues: Enolase (429 aa).

Position 162 (Gln-162) interacts with (2R)-2-phosphoglycerate. The active-site Proton donor is Glu-204. Asp-242, Glu-289, and Asp-316 together coordinate Mg(2+). (2R)-2-phosphoglycerate-binding residues include Lys-341, Arg-370, Ser-371, and Lys-392. Residue Lys-341 is the Proton acceptor of the active site.

This sequence belongs to the enolase family. The cofactor is Mg(2+).

The protein localises to the cytoplasm. It localises to the secreted. Its subcellular location is the cell surface. It catalyses the reaction (2R)-2-phosphoglycerate = phosphoenolpyruvate + H2O. It functions in the pathway carbohydrate degradation; glycolysis; pyruvate from D-glyceraldehyde 3-phosphate: step 4/5. In terms of biological role, catalyzes the reversible conversion of 2-phosphoglycerate (2-PG) into phosphoenolpyruvate (PEP). It is essential for the degradation of carbohydrates via glycolysis. The polypeptide is Enolase (Flavobacterium psychrophilum (strain ATCC 49511 / DSM 21280 / CIP 103535 / JIP02/86)).